Consider the following 249-residue polypeptide: Phosphatidylglycerol--prolipoprotein diacylglyceryl transferase (249 aa).

7 consecutive transmembrane segments (helical) span residues 11–31 (LKIY…VILL), 49–69 (AIVG…IVDI), 82–102 (LGNG…VYLY), 116–136 (LVVP…FLAG), 163–183 (LHPT…FLLW), 192–212 (GRVF…VEFL), and 223–243 (LSTS…VFNI). Arg129 is a binding site for a 1,2-diacyl-sn-glycero-3-phospho-(1'-sn-glycerol).

This sequence belongs to the Lgt family.

Its subcellular location is the cell membrane. It catalyses the reaction L-cysteinyl-[prolipoprotein] + a 1,2-diacyl-sn-glycero-3-phospho-(1'-sn-glycerol) = an S-1,2-diacyl-sn-glyceryl-L-cysteinyl-[prolipoprotein] + sn-glycerol 1-phosphate + H(+). It functions in the pathway protein modification; lipoprotein biosynthesis (diacylglyceryl transfer). Its function is as follows. Catalyzes the transfer of the diacylglyceryl group from phosphatidylglycerol to the sulfhydryl group of the N-terminal cysteine of a prolipoprotein, the first step in the formation of mature lipoproteins. This chain is Phosphatidylglycerol--prolipoprotein diacylglyceryl transferase, found in Clostridium tetani (strain Massachusetts / E88).